The chain runs to 373 residues: Sodium-dependent organic anion transporter (373 aa).

Positions 1 to 15 (MSTDCAGNSTCPVNS) are enriched in polar residues. Residues 1 to 21 (MSTDCAGNSTCPVNSTEEDPP) are disordered. Over 1–32 (MSTDCAGNSTCPVNSTEEDPPVGMEGHANLKL) the chain is Extracellular. N-linked (GlcNAc...) asparagine glycosylation is found at Asn-8 and Asn-14. A helical transmembrane segment spans residues 33–53 (LFTVLSAVMVGLVMFSFGCSV). Over 54 to 67 (ESQKLWLHLRRPWG) the chain is Cytoplasmic. A helical membrane pass occupies residues 68–88 (IAVGLLSQFGLMPLTAYLLAI). Over 89–97 (GFGLKPFQA) the chain is Extracellular. A helical transmembrane segment spans residues 98 to 118 (IAVLMMGSCPGGTISNVLTFW). At 119-126 (VDGDMDLS) the chain is on the cytoplasmic side. The helical transmembrane segment at 127–147 (ISMTTCSTVAALGMMPLCLYI) threads the bilayer. The Extracellular portion of the chain corresponds to 148–157 (YTRSWTLTQN). The helical transmembrane segment at 158 to 178 (LVIPYQSIGITLVSLVVPVAS) threads the bilayer. Topologically, residues 179 to 195 (GVYVNYRWPKQATVILK) are cytoplasmic. Residues 196-216 (VGAILGGMLLLVVAVTGMVLA) traverse the membrane as a helical segment. At 217–224 (KGWNTDVT) the chain is on the extracellular side. The chain crosses the membrane as a helical span at residues 225 to 245 (LLVISCIFPLVGHVTGFLLAF). At 246 to 265 (LTHQSWQRCRTISIETGAQN) the chain is on the cytoplasmic side. Residues 266-283 (IQLCIAMLQLSFSAEYLV) traverse the membrane as a helical segment. Gln-284 is a topological domain (extracellular). A helical membrane pass occupies residues 285-305 (LLNFALAYGLFQVLHGLLIVA). Residues 306 to 373 (AYQAYKRRQK…ELTSHIPSCE (68 aa)) lie on the Cytoplasmic side of the membrane.

The protein belongs to the bile acid:sodium symporter (BASS) (TC 2.A.28) family. Glycosylated. Highest expression in lung and testis, moderate expression in heart, bladder and skin, and low expression in blood, liver, stomach, small intestine, spleen, kidney, adrenal gland, seminal vesicle, preputial gland, coagulating gland, lacrimal gland/eye, and brain.

Its subcellular location is the membrane. The catalysed reaction is estrone 3-sulfate(out) + 2 Na(+)(out) = estrone 3-sulfate(in) + 2 Na(+)(in). It carries out the reaction 17beta-estradiol 3-sulfate(out) + 2 Na(+)(out) = 17beta-estradiol 3-sulfate(in) + 2 Na(+)(in). The enzyme catalyses dehydroepiandrosterone 3-sulfate(out) + 2 Na(+)(out) = dehydroepiandrosterone 3-sulfate(in) + 2 Na(+)(in). It catalyses the reaction androst-5-ene-diol 3-sulfate(out) + 2 Na(+)(out) = androst-5-ene-diol 3-sulfate(in) + 2 Na(+)(in). The catalysed reaction is pregnenolone sulfate(out) + 2 Na(+)(out) = pregnenolone sulfate(in) + 2 Na(+)(in). It carries out the reaction taurolithocholate 3-sulfate(out) + 2 Na(+)(out) = taurolithocholate 3-sulfate(in) + 2 Na(+)(in). The enzyme catalyses androsterone 3alpha-sulfate(out) + 2 Na(+)(out) = androsterone 3alpha-sulfate(in) + 2 Na(+)(in). It catalyses the reaction 5alpha-dihydrotestosterone sulfate(out) + 2 Na(+)(out) = 5alpha-dihydrotestosterone sulfate(in) + 2 Na(+)(in). The catalysed reaction is 17beta-estradiol 17-sulfate(out) + 2 Na(+)(out) = 17beta-estradiol 17-sulfate(in) + 2 Na(+)(in). It carries out the reaction 17alpha-hydroxypregnenolone 3-sulfate(out) + 2 Na(+)(out) = 17alpha-hydroxypregnenolone 3-sulfate(in) + 2 Na(+)(in). The enzyme catalyses epiandrosterone 3-sulfate(out) + 2 Na(+)(out) = epiandrosterone 3-sulfate(in) + 2 Na(+)(in). It catalyses the reaction epitestosterone 17-sulfate(out) + 2 Na(+)(out) = epitestosterone 17-sulfate(in) + 2 Na(+)(in). The catalysed reaction is testosterone 17-sulfate(out) + 2 Na(+)(out) = testosterone 17-sulfate(in) + 2 Na(+)(in). It carries out the reaction 16alpha-hydroxydehydroepiandrosterone 3-sulfate(out) + 2 Na(+)(out) = 16alpha-hydroxydehydroepiandrosterone 3-sulfate(in) + 2 Na(+)(in). Functionally, transports sulfoconjugated steroid hormones from the extracellular compartment into the cytosol in a sodium-dependent manner without hydrolysis. Steroid sulfate hormones are commonly considered to be biologically inactive metabolites, that may be activated by steroid sulfatases into free steroids. May play an important role by delivering sulfoconjugated steroids to specific target cells in reproductive organs. May play a role transporting the estriol precursor 16alpha-hydroxydehydroepiandrosterone 3-sulfate (16a-OH-DHEAS) at the fetal blood vessel endothelium. Can also transport other sulfoconjugated molecules such as taurolithocholic acid-3-sulfate and sulfoconjugated pyrenes. The sequence is that of Sodium-dependent organic anion transporter (Slc10a6) from Mus musculus (Mouse).